The primary structure comprises 157 residues: SsrA-binding protein (157 aa).

Basic and acidic residues predominate over residues 135-151 (DKRETEKKRDWSREKGR). The segment at 135–157 (DKRETEKKRDWSREKGRLLRARG) is disordered.

The protein belongs to the SmpB family.

It is found in the cytoplasm. Functionally, required for rescue of stalled ribosomes mediated by trans-translation. Binds to transfer-messenger RNA (tmRNA), required for stable association of tmRNA with ribosomes. tmRNA and SmpB together mimic tRNA shape, replacing the anticodon stem-loop with SmpB. tmRNA is encoded by the ssrA gene; the 2 termini fold to resemble tRNA(Ala) and it encodes a 'tag peptide', a short internal open reading frame. During trans-translation Ala-aminoacylated tmRNA acts like a tRNA, entering the A-site of stalled ribosomes, displacing the stalled mRNA. The ribosome then switches to translate the ORF on the tmRNA; the nascent peptide is terminated with the 'tag peptide' encoded by the tmRNA and targeted for degradation. The ribosome is freed to recommence translation, which seems to be the essential function of trans-translation. The sequence is that of SsrA-binding protein from Rhodopseudomonas palustris (strain BisB5).